A 280-amino-acid polypeptide reads, in one-letter code: 4-deoxy-L-threo-5-hexosulose-uronate ketol-isomerase 1 (280 aa).

Zn(2+)-binding residues include His-198, His-200, Glu-205, and His-247.

The protein belongs to the KduI family. Requires Zn(2+) as cofactor.

It carries out the reaction 5-dehydro-4-deoxy-D-glucuronate = 3-deoxy-D-glycero-2,5-hexodiulosonate. The protein operates within glycan metabolism; pectin degradation; 2-dehydro-3-deoxy-D-gluconate from pectin: step 4/5. Catalyzes the isomerization of 5-dehydro-4-deoxy-D-glucuronate to 3-deoxy-D-glycero-2,5-hexodiulosonate. The protein is 4-deoxy-L-threo-5-hexosulose-uronate ketol-isomerase 1 (kduI1) of Bacteroides thetaiotaomicron (strain ATCC 29148 / DSM 2079 / JCM 5827 / CCUG 10774 / NCTC 10582 / VPI-5482 / E50).